The following is a 1006-amino-acid chain: SAC3 family protein A (1006 aa).

Disordered regions lie at residues 1–75 (MNHG…GPAT), 106–162 (TPYQ…PGSY), 183–239 (GYQS…TIAT), 266–326 (GTEK…AVST), 516–550 (TVTTTNVTNSESSSAQLSSLQNKSPTRRPKSRWEP), 595–638 (GFKP…SDKD), and 650–690 (AGSA…GNLH). 2 stretches are compositionally biased toward polar residues: residues 26-75 (GSQT…GPAT) and 106-115 (TPYQTSSDPH). Low complexity predominate over residues 116 to 140 (NYSNTGYSNYYSGYQQQPSQSYPQP). The span at 144 to 162 (YQNTGAPQPLSSFQNPGSY) shows a compositional bias: polar residues. Composition is skewed to polar residues over residues 269 to 282 (KLSTPTTSAYSQSF) and 313 to 326 (SHPPSQQPGAAVST). Positions 516-539 (TVTTTNVTNSESSSAQLSSLQNKS) are enriched in low complexity. Basic residues predominate over residues 609–618 (SFQRPVKRQR). Residues 653 to 680 (AEEKKRRDSRSKRFEKIQGHSRGNDLTK) are compositionally biased toward basic and acidic residues. A PCI domain is found at 804 to 978 (DLPEYNQCLS…DMLLDTKATS (175 aa)).

Belongs to the SAC3 family. In terms of assembly, interacts with EER5, SAC3B and CML20.

The protein localises to the nucleus. Component of the TREX-2 complex (transcription and export complex 2), a muliprotein complex that functions in docking export-competent ribonucleoprotein particles (mRNPs) to the nuclear entrance of the nuclear pore complex (nuclear basket). TREX-2 participates in mRNA export and accurate chromatin positioning in the nucleus by tethering genes to the nuclear periphery. This Arabidopsis thaliana (Mouse-ear cress) protein is SAC3 family protein A.